The primary structure comprises 308 residues: Ribosomal RNA small subunit methyltransferase H (308 aa).

S-adenosyl-L-methionine contacts are provided by residues 36–38 (GGH), Asp-55, Phe-82, Asp-103, and Gln-110.

It belongs to the methyltransferase superfamily. RsmH family.

It is found in the cytoplasm. It carries out the reaction cytidine(1402) in 16S rRNA + S-adenosyl-L-methionine = N(4)-methylcytidine(1402) in 16S rRNA + S-adenosyl-L-homocysteine + H(+). Functionally, specifically methylates the N4 position of cytidine in position 1402 (C1402) of 16S rRNA. This is Ribosomal RNA small subunit methyltransferase H from Helicobacter pylori (strain J99 / ATCC 700824) (Campylobacter pylori J99).